The sequence spans 399 residues: Tryptophan synthase beta chain (399 aa).

Position 90 is an N6-(pyridoxal phosphate)lysine (lysine 90).

It belongs to the TrpB family. As to quaternary structure, tetramer of two alpha and two beta chains. Pyridoxal 5'-phosphate is required as a cofactor.

It catalyses the reaction (1S,2R)-1-C-(indol-3-yl)glycerol 3-phosphate + L-serine = D-glyceraldehyde 3-phosphate + L-tryptophan + H2O. Its pathway is amino-acid biosynthesis; L-tryptophan biosynthesis; L-tryptophan from chorismate: step 5/5. Functionally, the beta subunit is responsible for the synthesis of L-tryptophan from indole and L-serine. The polypeptide is Tryptophan synthase beta chain (Lactiplantibacillus plantarum (strain ATCC BAA-793 / NCIMB 8826 / WCFS1) (Lactobacillus plantarum)).